Reading from the N-terminus, the 492-residue chain is Probable glycine dehydrogenase (decarboxylating) subunit 2 (492 aa).

Position 274 is an N6-(pyridoxal phosphate)lysine (lysine 274).

This sequence belongs to the GcvP family. C-terminal subunit subfamily. In terms of assembly, the glycine cleavage system is composed of four proteins: P, T, L and H. In this organism, the P 'protein' is a heterodimer of two subunits. Requires pyridoxal 5'-phosphate as cofactor.

The catalysed reaction is N(6)-[(R)-lipoyl]-L-lysyl-[glycine-cleavage complex H protein] + glycine + H(+) = N(6)-[(R)-S(8)-aminomethyldihydrolipoyl]-L-lysyl-[glycine-cleavage complex H protein] + CO2. In terms of biological role, the glycine cleavage system catalyzes the degradation of glycine. The P protein binds the alpha-amino group of glycine through its pyridoxal phosphate cofactor; CO(2) is released and the remaining methylamine moiety is then transferred to the lipoamide cofactor of the H protein. The protein is Probable glycine dehydrogenase (decarboxylating) subunit 2 of Exiguobacterium sibiricum (strain DSM 17290 / CCUG 55495 / CIP 109462 / JCM 13490 / 255-15).